Reading from the N-terminus, the 166-residue chain is Cofilin-1 (166 aa).

At A2 the chain carries N-acetylalanine. A phosphoserine mark is found at S3 and S8. Positions 4-153 constitute an ADF-H domain; it reads GVAVSDGVIK…KDRCTLAEKL (150 aa). At K13 the chain carries N6-acetyllysine. Residue T25 is modified to Phosphothreonine. The short motif at 30–34 is the Nuclear localization signal element; it reads KKRKK. A Phosphoserine modification is found at S41. The residue at position 68 (Y68) is a Phosphotyrosine. K73 carries the N6-acetyllysine modification. K132 participates in a covalent cross-link: Glycyl lysine isopeptide (Lys-Gly) (interchain with G-Cter in SUMO2). Residue Y140 is modified to Phosphotyrosine. K144 bears the N6-acetyllysine mark. A Phosphoserine modification is found at S156.

The protein belongs to the actin-binding proteins ADF family. In terms of assembly, can bind G- and F-actin in a 1:1 ratio of cofilin to actin. It is a major component of intranuclear and cytoplasmic actin rods. Interacts with the subcortical maternal complex (SCMC) via interaction with TLE6 and NLRP5. Interacts with C9orf72. In terms of processing, inactivated by phosphorylation on Ser-3. Phosphorylated on Ser-3 in resting cells. Dephosphorylated by PDXP/chronophin; this restores its activity in promoting actin filament depolymerization. The phosphorylation of Ser-24 may prevent recognition of the nuclear localization signal. Phosphorylated via a ARRB1-RAC1-LIMK1-PAK1 cascade upon active ligand stimulation of atypical chemokine receptor ACKR2.

It is found in the nucleus matrix. It localises to the cytoplasm. The protein localises to the cytoskeleton. Its subcellular location is the cell projection. The protein resides in the ruffle membrane. It is found in the lamellipodium membrane. It localises to the lamellipodium. The protein localises to the growth cone. Its subcellular location is the axon. Binds to F-actin and exhibits pH-sensitive F-actin depolymerizing activity. Important for normal progress through mitosis and normal cytokinesis. In conjunction with the subcortical maternal complex (SCMC), plays an essential role for zygotes to progress beyond the first embryonic cell divisions via regulation of actin dynamics. Required for the centralization of the mitotic spindle and symmetric division of zygotes. Plays a role in the regulation of cell morphology and cytoskeletal organization in epithelial cells. Required for the up-regulation of atypical chemokine receptor ACKR2 from endosomal compartment to cell membrane, increasing its efficiency in chemokine uptake and degradation. Required for neural tube morphogenesis and neural crest cell migration. The protein is Cofilin-1 (Cfl1) of Rattus norvegicus (Rat).